Reading from the N-terminus, the 108-residue chain is uncharacterized protein (108 aa).

A helical transmembrane segment spans residues 15–37 (SYYFYIFWNFFLPMFIVYRGFGL).

It localises to the membrane. This is an uncharacterized protein from Archaeoglobus fulgidus (strain ATCC 49558 / DSM 4304 / JCM 9628 / NBRC 100126 / VC-16).